We begin with the raw amino-acid sequence, 136 residues long: Active regulator of SIRT1 (136 aa).

Position 7 is a citrulline (Arg7). A disordered region spans residues 13–58 (LAASEAPRDPPGQAKPRGAPVKRPRKTKAIQAQKLRNSAKGKVPKS). Phosphoserine is present on Ser84.

This sequence belongs to the AROS family. Part of the small subunit (SSU) processome, composed of more than 70 proteins and the RNA chaperone small nucleolar RNA (snoRNA) U3. Interacts with RPS19; the interaction is direct and mediates the integration of RPS19 in state post-A1. Interacts with SIRT1. Citrullinated by PADI4. Widely expressed (at protein level).

It localises to the nucleus. Its subcellular location is the nucleolus. Functionally, part of the small subunit (SSU) processome, first precursor of the small eukaryotic ribosomal subunit. During the assembly of the SSU processome in the nucleolus, many ribosome biogenesis factors, an RNA chaperone and ribosomal proteins associate with the nascent pre-rRNA and work in concert to generate RNA folding, modifications, rearrangements and cleavage as well as targeted degradation of pre-ribosomal RNA by the RNA exosome. Acts as a chaperone that specifically mediates the integration of RPS19 in state post-A1. Direct regulator of SIRT1. Enhances SIRT1-mediated deacetylation of p53/TP53, thereby participating in inhibition of p53/TP53-mediated transcriptional activity. The polypeptide is Active regulator of SIRT1 (Homo sapiens (Human)).